The sequence spans 355 residues: Peptide chain release factor 1 (355 aa).

Glutamine 233 carries the N5-methylglutamine modification. The segment covering 282-293 (RKKEQARADSRR) has biased composition (basic and acidic residues). The interval 282–305 (RKKEQARADSRRGQVGSGDRSERI) is disordered.

It belongs to the prokaryotic/mitochondrial release factor family. Methylated by PrmC. Methylation increases the termination efficiency of RF1.

Its subcellular location is the cytoplasm. Functionally, peptide chain release factor 1 directs the termination of translation in response to the peptide chain termination codons UAG and UAA. This chain is Peptide chain release factor 1, found in Rickettsia rickettsii (strain Iowa).